Consider the following 122-residue polypeptide: Small ribosomal subunit protein bS16 (122 aa).

The tract at residues 85–122 (REAKNNPIKAKPGKRAQERAAEKAQKAADAAAAADAAE) is disordered. Residues 99-110 (RAQERAAEKAQK) show a composition bias toward basic and acidic residues. Over residues 111 to 122 (AADAAAAADAAE) the composition is skewed to low complexity.

The protein belongs to the bacterial ribosomal protein bS16 family.

In Rhizobium etli (strain ATCC 51251 / DSM 11541 / JCM 21823 / NBRC 15573 / CFN 42), this protein is Small ribosomal subunit protein bS16.